The following is a 385-amino-acid chain: MKVLVLGAGLMGKEAARDLVQSQDVEAVTLADVDLAKAEQTVRQLHSKKLAAVRVDAGDPQQLAAAMKGHDVVVNALFYQFNETVAKTAIETGVHSVDLGGHIGHITDRVLELHERAQAAGVTIIPDLGVAPGMINILSGYGASQLDEVESILLYVGGIPVRPEPPLEYNHVFSLEGLLDHYTDPALIIRNGQKQEVPSLSEVEPIYFDRFGPLEAFHTSGGTSTLSRSFPNLKRLEYKTIRYRGHAEKCKLLVDLTLTRHDVEVEINGCRVKPRDVLLSVLKPLLDLKGKDDVVLLRVIVGGRKDGKETVLEYETVTFNDRENKVTAMARTTAYTISAVAQLIGRGVITKRGVYPPEQIVPGDVYMDEMKKRGVLISEKRTVHS.

Belongs to the saccharopine dehydrogenase family. Homohexamer.

It catalyses the reaction L-lysine + NAD(+) = L-1-piperideine-6-carboxylate + NH4(+) + NADH + 2 H(+). Functionally, catalyzes the oxidative deamination of L-lysine in the presence of NAD. Can also use (S)-(2-aminoethyl)-L-cysteine as a substrate, but more slowly. Can use both NAD and NADP but the preferred substrate is NAD. The sequence is that of Lysine 6-dehydrogenase (lysDH) from Geobacillus stearothermophilus (Bacillus stearothermophilus).